A 430-amino-acid chain; its full sequence is Potassium channel subfamily K member 12 (430 aa).

Over 1 to 38 (MSSRSPRPPPRRCRRRLPRPSCCCCCCRRSHLNEDTGR) the chain is Cytoplasmic. The segment at 11–16 (RRCRRR) is ER retention/retrieval signal. A helical transmembrane segment spans residues 39–59 (FVLLAALIGLYLVAGATVFSA). Residue Asn-78 is glycosylated (N-linked (GlcNAc...) asparagine). Positions 114-134 (WDFPGAFYFVGTVVSTIGFGM) form an intramembrane region, pore-forming. 3 residues coordinate K(+): Thr-129, Ile-130, and Gly-131. Positions 129-134 (TIGFGM) are selectivity filter 1. The chain crosses the membrane as a helical span at residues 145 to 165 (FLIAYGLFGCAGTILFFNLFL). Topologically, residues 166 to 212 (ERIISLLAFIMRACRERQLRRSGLLPATFRRGSALSEADSLAGWKPS) are cytoplasmic. Residues 213–233 (VYHVLLILGLFAVLLACCASA) form a helical membrane-spanning segment. An intramembrane region (pore-forming) is located at residues 243 to 263 (YVDSLYFCFVTFSTIGFGDLV). The K(+) site is built by Thr-256, Ile-257, Gly-258, and Phe-259. Residues 256–261 (TIGFGD) are selectivity filter 2. A helical transmembrane segment spans residues 282 to 302 (LFILLGVCCIYSLFNVISILI). At 303–430 (KQVLNWMLRK…NRLAETSASR (128 aa)) the chain is on the cytoplasmic side.

Belongs to the two pore domain potassium channel (TC 1.A.1.8) family. In terms of assembly, homodimer. Heterodimer with KCNK13. As to expression, highly expressed in most brain regions. Also expressed in other tissues such as lung, kidney, liver, stomach and spleen.

The protein resides in the cell membrane. Its subcellular location is the endoplasmic reticulum membrane. The enzyme catalyses K(+)(in) = K(+)(out). K(+) channel subunit that may homo- and heterodimerize to form functional channels with distinct regulatory and gating properties. Can heterodimerize with KCNK13 subunit to conduct K(+) outward rectifying currents at the plasma membrane. The homodimers are mainly retained in the endoplasmic reticulum compartment and may be targeted to the cell surface upon phosphorylation or other activation signals yet to be elucidated. This Rattus norvegicus (Rat) protein is Potassium channel subfamily K member 12 (Kcnk12).